A 323-amino-acid polypeptide reads, in one-letter code: ComG operon protein 2 (323 aa).

3 consecutive transmembrane segments (helical) span residues 93–113 (YPLF…SIII), 143–163 (LVII…WLVF), and 296–316 (MIYG…LVPM).

This sequence belongs to the GSP F family.

The protein resides in the cell membrane. In terms of biological role, required for transformation and DNA binding. This Bacillus subtilis (strain 168) protein is ComG operon protein 2 (comGB).